Reading from the N-terminus, the 197-residue chain is 5'-deoxynucleotidase plu3092 (197 aa).

Residues 16 to 17 (RW) and H31 contribute to the substrate site. An HD domain is found at 28-140 (VSEHSLQVAF…IKQADSLCAY (113 aa)). Residues H31, H66, and D67 each contribute to the a divalent metal cation site. Residues D67, 75-78 (DLPT), and D135 contribute to the substrate site. Position 135 (D135) interacts with a divalent metal cation.

Belongs to the 5DNU family. As to quaternary structure, homodimer. A divalent metal cation is required as a cofactor.

The protein localises to the cytoplasm. It catalyses the reaction a 2'-deoxyribonucleoside 5'-phosphate + H2O = a 2'-deoxyribonucleoside + phosphate. In terms of biological role, catalyzes the strictly specific dephosphorylation of 2'-deoxyribonucleoside 5'-monophosphates. This is 5'-deoxynucleotidase plu3092 from Photorhabdus laumondii subsp. laumondii (strain DSM 15139 / CIP 105565 / TT01) (Photorhabdus luminescens subsp. laumondii).